The following is a 549-amino-acid chain: MEEVAPEQVQEVQGNTEAHIDSTTASTAPTEALPSDKQSRKANEIDSMADGAPAEKKQKTDQRQIIREPKLDDNGNPIPREPRLPKRKVAVMIGYCGTGYHGMQYNPPNPTIEAALFKAFVDAGAISKANSNDLKKNNFMRAARTDKGVHAGGNLISLKMIIEDPEIMDKINANLPEGIRIWDIERVNKAFDCRKMCSSRWYEYLLPTYSLIGPKPGTILNNDIESSKTELPGVLDEDLESKEFWENFEAAAKKEFTPEEIAAIKDYSPPPREEFDDQEELYQKVKQWKLLENTHRRQYRISEMKLNKFRAAMNQYLGAHNFHNFTLGKEFKDPSAIRFMKEIKVSDPFVIGDAKAEWVSIKIHGQSFMLHQIRKMISMATLIARCGTPVERISQAFGPQKINIPKAPALGLLLEAPVFESYNKRLEKFGYKPIDFSKYQEKVDAFKMKHIYDKIYAEEVSDNVFNAFFSYIDSFNKVTGAQTEESAESNKPATKSIFEFLSAHGIPGIDYGKNEKEDSNKESSNDQVNKESAPATSKPAEAVEQTEKN.

Over residues Met1–Gln13 the composition is skewed to low complexity. Residues Met1 to Arg83 form a disordered region. Over residues Pro53 to Asp73 the composition is skewed to basic and acidic residues. The active-site Nucleophile is Asp146. The disordered stretch occupies residues Pro507 to Asn549. Positions Gly512–Ser524 are enriched in basic and acidic residues.

It belongs to the tRNA pseudouridine synthase TruA family. The cofactor is Zn(2+).

The protein resides in the nucleus. The catalysed reaction is a uridine in tRNA = a pseudouridine in tRNA. The enzyme catalyses uridine in snRNA = pseudouridine in snRNA. It catalyses the reaction a uridine in mRNA = a pseudouridine in mRNA. Formation of pseudouridine at positions 27 and 28 in the anticodon stem and loop of transfer RNAs; at positions 34 and 36 of intron-containing precursor tRNA(Ile) and at position 35 in the intron-containing tRNA(Tyr). Catalyzes pseudouridylation at position 44 in U2 snRNA. Also catalyzes pseudouridylation of mRNAs. The sequence is that of tRNA pseudouridine synthase 1 (PUS1) from Candida glabrata (strain ATCC 2001 / BCRC 20586 / JCM 3761 / NBRC 0622 / NRRL Y-65 / CBS 138) (Yeast).